Consider the following 149-residue polypeptide: D-aminoacyl-tRNA deacylase (149 aa).

The Gly-cisPro motif, important for rejection of L-amino acids motif lies at 137 to 138 (GP).

Belongs to the DTD family. In terms of assembly, homodimer.

The protein localises to the cytoplasm. The catalysed reaction is glycyl-tRNA(Ala) + H2O = tRNA(Ala) + glycine + H(+). It carries out the reaction a D-aminoacyl-tRNA + H2O = a tRNA + a D-alpha-amino acid + H(+). Functionally, an aminoacyl-tRNA editing enzyme that deacylates mischarged D-aminoacyl-tRNAs. Also deacylates mischarged glycyl-tRNA(Ala), protecting cells against glycine mischarging by AlaRS. Acts via tRNA-based rather than protein-based catalysis; rejects L-amino acids rather than detecting D-amino acids in the active site. By recycling D-aminoacyl-tRNA to D-amino acids and free tRNA molecules, this enzyme counteracts the toxicity associated with the formation of D-aminoacyl-tRNA entities in vivo and helps enforce protein L-homochirality. This chain is D-aminoacyl-tRNA deacylase, found in Herminiimonas arsenicoxydans.